Consider the following 410-residue polypeptide: Squalene synthase 1 (410 aa).

Position 2 is an N-acetylglycine (G2). The next 2 helical transmembrane spans lie at 283–303 and 387–407; these read SIFR…ALCY and QPNS…FAYL.

It belongs to the phytoene/squalene synthase family. Mg(2+) serves as cofactor. Mn(2+) is required as a cofactor. In terms of tissue distribution, expressed in all tissues analyzed (seedlings, cotyledons, inflorescences, siliques, leaves, stems and roots). Highly expressed in roots and pollen.

The protein resides in the endoplasmic reticulum membrane. It catalyses the reaction 2 (2E,6E)-farnesyl diphosphate + NADPH + H(+) = squalene + 2 diphosphate + NADP(+). The enzyme catalyses 2 (2E,6E)-farnesyl diphosphate + NADH + H(+) = squalene + 2 diphosphate + NAD(+). The protein operates within terpene metabolism; lanosterol biosynthesis; lanosterol from farnesyl diphosphate: step 1/3. This is Squalene synthase 1 from Arabidopsis thaliana (Mouse-ear cress).